The chain runs to 333 residues: PRKC apoptosis WT1 regulator protein (333 aa).

Composition is skewed to low complexity over residues 1-14 (MATG…STTT), 33-51 (PAGP…PAGS), 66-80 (GPAG…APGA), and 105-116 (PSAAAASGAPGS). A disordered region spans residues 1 to 262 (MATGGYRSGG…ASFSSSSTLE (262 aa)). The B30.2/SPRY domain-binding motif signature appears at 62–66 (ELNHG). The Nuclear localization signal signature appears at 138–154 (RKGKGQIEKRKLREKRR). The interval 138-196 (RKGKGQIEKRKLREKRRSTGVVNIPAAECLDEYEDDEAGQKERKREDAITQQNTIQNEA) is selective for apoptosis induction in cancer cells (SAC). The residue at position 156 (Thr-156) is a Phosphothreonine; by PKA. A compositionally biased stretch (basic and acidic residues) spans 175 to 185 (AGQKERKREDA). Over residues 186 to 196 (ITQQNTIQNEA) the composition is skewed to polar residues. Ser-224 carries the phosphoserine modification. A compositionally biased stretch (basic and acidic residues) spans 235–248 (PRTDRSGFSRHNRD). Residues 255–333 (FSSSSTLEKR…LLKVVGQLTR (79 aa)) are a coiled coil. Residues 293–333 (IGKLKEEIDLLNRDLDDMEDENEQLKQENKTLLKVVGQLTR) form a leucine-zipper region.

In terms of assembly, homooligomer. Interacts (via the C-terminal region) with WT1. Interacts with THAP1. Interacts with AATF. Interacts with BACE1. Interacts with SPSB1 (via B30.2/SPRY domain); this interaction is direct and occurs in association with the Elongin BC complex. Interacts with SPSB2 (via B30.2/SPRY domain); this interaction occurs in association with the Elongin BC complex. Interacts with SPSB4 (via B30.2/SPRY domain); this interaction occurs in association with the Elongin BC complex. Component of a ternary complex composed of SQSTM1 and PRKCZ. Interacts with actin. Post-translationally, preferentially phosphorylated at the Thr-156 by PKC in cancer cells.

The protein resides in the cytoplasm. Its subcellular location is the nucleus. Functionally, pro-apoptotic protein capable of selectively inducing apoptosis in cancer cells, sensitizing the cells to diverse apoptotic stimuli and causing regression of tumors in animal models. Induces apoptosis in certain cancer cells by activation of the Fas prodeath pathway and coparallel inhibition of NF-kappa-B transcriptional activity. Inhibits the transcriptional activation and augments the transcriptional repression mediated by WT1. Down-regulates the anti-apoptotic protein BCL2 via its interaction with WT1. Also seems to be a transcriptional repressor by itself. May be directly involved in regulating the amyloid precursor protein (APP) cleavage activity of BACE1. This is PRKC apoptosis WT1 regulator protein (Pawr) from Mus musculus (Mouse).